The following is a 120-amino-acid chain: NAD(P)H-quinone oxidoreductase subunit 3, chloroplastic (120 aa).

Helical transmembrane passes span 9–29 (FFWA…FISG), 64–84 (MFAL…PWAM), and 88–108 (VLGV…IIGL).

The protein belongs to the complex I subunit 3 family. NDH is composed of at least 16 different subunits, 5 of which are encoded in the nucleus.

Its subcellular location is the plastid. It localises to the chloroplast thylakoid membrane. The enzyme catalyses a plastoquinone + NADH + (n+1) H(+)(in) = a plastoquinol + NAD(+) + n H(+)(out). It catalyses the reaction a plastoquinone + NADPH + (n+1) H(+)(in) = a plastoquinol + NADP(+) + n H(+)(out). Its function is as follows. NDH shuttles electrons from NAD(P)H:plastoquinone, via FMN and iron-sulfur (Fe-S) centers, to quinones in the photosynthetic chain and possibly in a chloroplast respiratory chain. The immediate electron acceptor for the enzyme in this species is believed to be plastoquinone. Couples the redox reaction to proton translocation, and thus conserves the redox energy in a proton gradient. In Atropa belladonna (Belladonna), this protein is NAD(P)H-quinone oxidoreductase subunit 3, chloroplastic.